Consider the following 837-residue polypeptide: Histone acetyltransferase KAT2A (837 aa).

The interval Met-1 to Arg-99 is disordered. At Ala-2 the chain carries N-acetylalanine. The span at Ala-7 to Ala-51 shows a compositional bias: pro residues. Residues Thr-58–Gly-74 are compositionally biased toward gly residues. Residues Asp-75–Ala-87 are compositionally biased toward low complexity. The segment covering Ser-88–Arg-99 has biased composition (basic residues). Ser-307 carries the post-translational modification Phosphoserine. Residues Phe-407 to Arg-434 are disordered. Positions Asn-416–Gly-425 are enriched in low complexity. In terms of domain architecture, N-acetyltransferase spans Val-503–Asn-656. An N6-acetyllysine modification is found at Lys-549. The Proton donor/acceptor role is filled by Glu-575. Acetyl-CoA-binding positions include Cys-579–Val-581, Gln-586–Thr-592, and Tyr-617. Succinyl-CoA-binding positions include Cys-579–Val-581, Gln-586–Thr-592, and Tyr-617. Residues Leu-639–Ala-648 form a loop 3 region. Lys-728 is covalently cross-linked (Glycyl lysine isopeptide (Lys-Gly) (interchain with G-Cter in SUMO2)). The Bromo domain occupies Lys-728–Gly-832. The residue at position 735 (Thr-735) is a Phosphothreonine. Glycyl lysine isopeptide (Lys-Gly) (interchain with G-Cter in SUMO2) cross-links involve residues Lys-759 and Lys-791.

Belongs to the acetyltransferase family. GCN5 subfamily. In terms of assembly, homooligomer; may form a tetramer of homodimers. Interacts with EP300, CREBBP and ADA2. Component of the TFTC-HAT complex, at least composed of TAF5L, TAF6L, TAF3, TADA3L, SUPT3H/SPT3, TAF2/TAFII150, TAF4/TAFII135, TAF5/TAFII100, KAT2A/GCN5L2, TAF10 and TRRAP. Component of the STAGA transcription coactivator-HAT complex, at least composed of SUPT3H, KAT2A, SUPT7L, TAF5L, TAF6L, TADA3L, TAD1L, TAF10, TAF12, TRRAP and TAF9. The STAGA core complex is associated with a subcomplex required for histone deubiquitination composed of ATXN7L3, ENY2 and USP22. Component of the ADA2A-containing complex (ATAC), composed of KAT14, KAT2A, TADA2L, TADA3L, ZZ3, MBIP, WDR5, YEATS2, CCDC101 and DR1. In the complex, it probably interacts directly with KAT14, MBIP and WDR5. Interacts with PML. Interacts with CEBPB. Interacts with TACC1, TACC2 and TACC3. Interacts with RELA. Interacts with NFATC2. Interacts with TBX5. Interacts with PLK4. Associates with the 2-oxoglutarate dehydrogenase complex. Interacts with XPC; leading to KAT2A recruitment to promoters and subsequent acetylation of histones. Interacts with ERCC3/XPB; leading to KAT2A recruitment to promoters and subsequent acetylation of histones. Interacts with ISL1. Interactions of ISL1 with MLIP1 or KAT2A may be mutually exclusive. (Microbial infection) Interacts with and acetylates HIV-1 Tat. Post-translationally, acetylated at Lys-549, inhibiting the protein acetyltransferase activity. Deacetylation at Lys-549 by SIRT6 promotes phosphorylation at Ser-307 and Thr-735 and subsequent activation of the protein acetyltransferase activity, leading to acetylation and inactivation of PPARGC1A. In terms of tissue distribution, expressed in all tissues tested.

The protein resides in the nucleus. It localises to the chromosome. It is found in the cytoplasm. Its subcellular location is the cytoskeleton. The protein localises to the microtubule organizing center. The protein resides in the centrosome. The enzyme catalyses L-lysyl-[histone] + acetyl-CoA = N(6)-acetyl-L-lysyl-[histone] + CoA + H(+). The catalysed reaction is L-lysyl-[protein] + acetyl-CoA = N(6)-acetyl-L-lysyl-[protein] + CoA + H(+). It catalyses the reaction succinyl-CoA + L-lysyl-[protein] = N(6)-succinyl-L-lysyl-[protein] + CoA + H(+). It carries out the reaction glutaryl-CoA + L-lysyl-[protein] = N(6)-glutaryl-L-lysyl-[protein] + CoA + H(+). In terms of biological role, protein lysine acyltransferase that can act as a acetyltransferase, glutaryltransferase, succinyltransferase or malonyltransferase, depending on the context. Acts as a histone lysine succinyltransferase: catalyzes succinylation of histone H3 on 'Lys-79' (H3K79succ), with a maximum frequency around the transcription start sites of genes. Succinylation of histones gives a specific tag for epigenetic transcription activation. Association with the 2-oxoglutarate dehydrogenase complex, which provides succinyl-CoA, is required for histone succinylation. In different complexes, functions either as an acetyltransferase (HAT) or as a succinyltransferase: in the SAGA and ATAC complexes, acts as a histone acetyltransferase. Has significant histone acetyltransferase activity with core histones, but not with nucleosome core particles. Has a a strong preference for acetylation of H3 at 'Lys-9' (H3K9ac). Acetylation of histones gives a specific tag for epigenetic transcription activation. Recruited by the XPC complex at promoters, where it specifically mediates acetylation of histone variant H2A.Z.1/H2A.Z, thereby promoting expression of target genes. Involved in long-term memory consolidation and synaptic plasticity: acts by promoting expression of a hippocampal gene expression network linked to neuroactive receptor signaling. Acts as a positive regulator of T-cell activation: upon TCR stimulation, recruited to the IL2 promoter following interaction with NFATC2 and catalyzes acetylation of histone H3 at 'Lys-9' (H3K9ac), leading to promote IL2 expression. Required for growth and differentiation of craniofacial cartilage and bone by regulating acetylation of histone H3 at 'Lys-9' (H3K9ac). Regulates embryonic stem cell (ESC) pluripotency and differentiation. Also acetylates non-histone proteins, such as CEBPB, MRE11, PPARGC1A, PLK4 and TBX5. Involved in heart and limb development by mediating acetylation of TBX5, acetylation regulating nucleocytoplasmic shuttling of TBX5. Acts as a negative regulator of centrosome amplification by mediating acetylation of PLK4. Acts as a negative regulator of gluconeogenesis by mediating acetylation and subsequent inactivation of PPARGC1A. Also acts as a histone glutaryltransferase: catalyzes glutarylation of histone H4 on 'Lys-91' (H4K91glu), a mark that destabilizes nucleosomes by promoting dissociation of the H2A-H2B dimers from nucleosomes. (Microbial infection) In case of HIV-1 infection, it is recruited by the viral protein Tat. Regulates Tat's transactivating activity and may help inducing chromatin remodeling of proviral genes. This chain is Histone acetyltransferase KAT2A, found in Homo sapiens (Human).